The following is a 146-amino-acid chain: VHLTAEEKSAVAALWGKVNTDEVGGEALGRLLVVYPWTQRFFDSFGDLSSASAVMSNPKVKAHGKKVFDSFSNGLKHLDNLKGTFASLSELHCDKLHVDPENFKLLGNVLVVVLAHHLGKEFTPQVQSAFQKVVTGVANALAHKYH.

N-acetylvaline is present on Val-1. One can recognise a Globin domain in the interval 2 to 146 (HLTAEEKSAV…VANALAHKYH (145 aa)). Ser-44 bears the Phosphoserine mark. Position 59 is an N6-acetyllysine (Lys-59). Residue His-63 coordinates heme b. At Lys-82 the chain carries N6-acetyllysine. Heme b is bound at residue His-92. S-nitrosocysteine is present on Cys-93. Lys-144 carries the N6-acetyllysine modification.

Belongs to the globin family. Heterotetramer of two alpha chains and two beta chains. As to expression, red blood cells.

In terms of biological role, involved in oxygen transport from the lung to the various peripheral tissues. The polypeptide is Hemoglobin subunit beta (Tamias merriami (Merriam's chipmunk)).